The primary structure comprises 500 residues: MTEAKAAWNALRDTPATSLTELFTNEPDRLSRLSMEEAGILFDFSKTHLSAALIDRFAALAEASGFAARRDALFAGAAVNVTEDRAAEHPAERGQGAPDSVARARGFHARMRGMIDAIEAEVFGPIRHILHVGIGGSALGPDLLVDALGRDAGRYEVAVVSNVDGAALDAVFRRFDPQATLLVVASKTFTTTETMLNARSVLAWMEEDNVEDPYSRVIALTAAPEKAVEWGIDETRILPFSESVGGRYSLWSSIGFPVALALGWDAFEELLEGAAAMDRHFRLAPPSANIPLLAAFVDQYYSVLRGAETRAVFAYDERLRLLPSYLQQLEMESNGKGVKADGSPVDGPTAAITWGGVGTDAQHAVFQLLHQGTRLVPVEFVAAIEPDHVLDDAHHRTLLVNCFAQGAALMAGRDNGDPARAYPGDRPSTTILLDRLDPGRLGALIAFYEHRTFANAVLLGINPFDQFGVELGKEIARSIESEGTDRFDPSTRALIARALG.

Glu332 functions as the Proton donor in the catalytic mechanism. Catalysis depends on residues His363 and Lys473.

Belongs to the GPI family.

It localises to the cytoplasm. It catalyses the reaction alpha-D-glucose 6-phosphate = beta-D-fructose 6-phosphate. It participates in carbohydrate biosynthesis; gluconeogenesis. It functions in the pathway carbohydrate degradation; glycolysis; D-glyceraldehyde 3-phosphate and glycerone phosphate from D-glucose: step 2/4. Functionally, catalyzes the reversible isomerization of glucose-6-phosphate to fructose-6-phosphate. This Rhizorhabdus wittichii (strain DSM 6014 / CCUG 31198 / JCM 15750 / NBRC 105917 / EY 4224 / RW1) (Sphingomonas wittichii) protein is Glucose-6-phosphate isomerase.